The following is a 183-amino-acid chain: uncharacterized protein (183 aa).

Disordered regions lie at residues M1–A44, G68–R137, and R163–E183.

This is an uncharacterized protein from Dryophytes versicolor (chameleon treefrog).